Consider the following 255-residue polypeptide: Aquaporin TIP4-1 (255 aa).

A run of 2 helical transmembrane segments spans residues 25–45 (AVLAELVLTFLFVFTGVSAAM) and 61–81 (TLAAVAIAHALAAGVLVTAGF). The short motif at 89–91 (NPA) is the NPA 1 element. Transmembrane regions (helical) follow at residues 108 to 128 (VLYVAAQLLASSAACVLLRFL), 148 to 168 (GLVMEVILTFSLLFVTYAMIL), and 176 to 196 (AIGPLLTGLIVGANSLAGGNF). An NPA 2 motif is present at residues 202 to 204 (NPA). The chain crosses the membrane as a helical span at residues 223-243 (WIGPLLGGPLAGFVYESLFLV).

It belongs to the MIP/aquaporin (TC 1.A.8) family. TIP (TC 1.A.8.10) subfamily.

The protein resides in the vacuole membrane. In terms of biological role, aquaporins facilitate the transport of water and small neutral solutes across cell membranes. The sequence is that of Aquaporin TIP4-1 (TIP4-1) from Zea mays (Maize).